A 712-amino-acid chain; its full sequence is DNA ligase (712 aa).

Residues 1–22 (MVQKNEHQGGQSQHSLFAAGPT) form a disordered region. NAD(+) contacts are provided by residues 53-57 (DDQFD) and D138. Residue K140 is the N6-AMP-lysine intermediate of the active site. R161, E199, K318, and K342 together coordinate NAD(+). 4 residues coordinate Zn(2+): C436, C439, C454, and C459. The disordered stretch occupies residues 612-631 (RGGRSGGGSSGSTGEGGLAS). The span at 614 to 630 (GRSGGGSSGSTGEGGLA) shows a compositional bias: gly residues. The BRCT domain maps to 629 to 712 (LASGPLAGKN…MLREAKAASE (84 aa)).

It belongs to the NAD-dependent DNA ligase family. LigA subfamily. It depends on Mg(2+) as a cofactor. Requires Mn(2+) as cofactor.

The catalysed reaction is NAD(+) + (deoxyribonucleotide)n-3'-hydroxyl + 5'-phospho-(deoxyribonucleotide)m = (deoxyribonucleotide)n+m + AMP + beta-nicotinamide D-nucleotide.. Functionally, DNA ligase that catalyzes the formation of phosphodiester linkages between 5'-phosphoryl and 3'-hydroxyl groups in double-stranded DNA using NAD as a coenzyme and as the energy source for the reaction. It is essential for DNA replication and repair of damaged DNA. In Desulfovibrio desulfuricans (strain ATCC 27774 / DSM 6949 / MB), this protein is DNA ligase.